The chain runs to 311 residues: 4-hydroxy-tetrahydrodipicolinate synthase (311 aa).

Thr-51 contacts pyruvate. Tyr-140 functions as the Proton donor/acceptor in the catalytic mechanism. Lys-168 functions as the Schiff-base intermediate with substrate in the catalytic mechanism. Ile-209 lines the pyruvate pocket.

This sequence belongs to the DapA family. As to quaternary structure, homotetramer; dimer of dimers.

The protein resides in the cytoplasm. It catalyses the reaction L-aspartate 4-semialdehyde + pyruvate = (2S,4S)-4-hydroxy-2,3,4,5-tetrahydrodipicolinate + H2O + H(+). It functions in the pathway amino-acid biosynthesis; L-lysine biosynthesis via DAP pathway; (S)-tetrahydrodipicolinate from L-aspartate: step 3/4. Catalyzes the condensation of (S)-aspartate-beta-semialdehyde [(S)-ASA] and pyruvate to 4-hydroxy-tetrahydrodipicolinate (HTPA). The sequence is that of 4-hydroxy-tetrahydrodipicolinate synthase from Streptococcus pneumoniae (strain Hungary19A-6).